We begin with the raw amino-acid sequence, 379 residues long: Alanine racemase (379 aa).

The active-site Proton acceptor; specific for D-alanine is the lysine 37. Lysine 37 carries the N6-(pyridoxal phosphate)lysine modification. Arginine 137 lines the substrate pocket. The active-site Proton acceptor; specific for L-alanine is the tyrosine 269. Substrate is bound at residue methionine 317.

This sequence belongs to the alanine racemase family. It depends on pyridoxal 5'-phosphate as a cofactor.

The catalysed reaction is L-alanine = D-alanine. It functions in the pathway amino-acid biosynthesis; D-alanine biosynthesis; D-alanine from L-alanine: step 1/1. Its function is as follows. Catalyzes the interconversion of L-alanine and D-alanine. May also act on other amino acids. In Citrifermentans bemidjiense (strain ATCC BAA-1014 / DSM 16622 / JCM 12645 / Bem) (Geobacter bemidjiensis), this protein is Alanine racemase (alr).